The sequence spans 229 residues: Cytochrome c oxidase subunit 2 (229 aa).

Residues 1 to 14 (MAQQAQLGLQDAAS) lie on the Mitochondrial intermembrane side of the membrane. The chain crosses the membrane as a helical span at residues 15–45 (PIMEELIHFHDHTLTVVFLISVLIFYLIIVM). Residues 46-59 (VTTTFMNKHSLDSQ) are Mitochondrial matrix-facing. Residues 60 to 87 (EVEIVWTVMPAIVLITIALPSLRILYLT) traverse the membrane as a helical segment. Residues 88–229 (DEISNPHLTI…ENWTTKVLAS (142 aa)) lie on the Mitochondrial intermembrane side of the membrane. Residues histidine 161, cysteine 196, glutamate 198, cysteine 200, histidine 204, and methionine 207 each contribute to the Cu cation site. Glutamate 198 lines the Mg(2+) pocket.

This sequence belongs to the cytochrome c oxidase subunit 2 family. Component of the cytochrome c oxidase (complex IV, CIV), a multisubunit enzyme composed of 14 subunits. The complex is composed of a catalytic core of 3 subunits MT-CO1, MT-CO2 and MT-CO3, encoded in the mitochondrial DNA, and 11 supernumerary subunits COX4I, COX5A, COX5B, COX6A, COX6B, COX6C, COX7A, COX7B, COX7C, COX8 and NDUFA4, which are encoded in the nuclear genome. The complex exists as a monomer or a dimer and forms supercomplexes (SCs) in the inner mitochondrial membrane with NADH-ubiquinone oxidoreductase (complex I, CI) and ubiquinol-cytochrome c oxidoreductase (cytochrome b-c1 complex, complex III, CIII), resulting in different assemblies (supercomplex SCI(1)III(2)IV(1) and megacomplex MCI(2)III(2)IV(2)). Found in a complex with TMEM177, COA6, COX18, COX20, SCO1 and SCO2. Interacts with TMEM177 in a COX20-dependent manner. Interacts with COX20. Interacts with COX16. Cu cation serves as cofactor.

The protein localises to the mitochondrion inner membrane. The catalysed reaction is 4 Fe(II)-[cytochrome c] + O2 + 8 H(+)(in) = 4 Fe(III)-[cytochrome c] + 2 H2O + 4 H(+)(out). Its function is as follows. Component of the cytochrome c oxidase, the last enzyme in the mitochondrial electron transport chain which drives oxidative phosphorylation. The respiratory chain contains 3 multisubunit complexes succinate dehydrogenase (complex II, CII), ubiquinol-cytochrome c oxidoreductase (cytochrome b-c1 complex, complex III, CIII) and cytochrome c oxidase (complex IV, CIV), that cooperate to transfer electrons derived from NADH and succinate to molecular oxygen, creating an electrochemical gradient over the inner membrane that drives transmembrane transport and the ATP synthase. Cytochrome c oxidase is the component of the respiratory chain that catalyzes the reduction of oxygen to water. Electrons originating from reduced cytochrome c in the intermembrane space (IMS) are transferred via the dinuclear copper A center (CU(A)) of subunit 2 and heme A of subunit 1 to the active site in subunit 1, a binuclear center (BNC) formed by heme A3 and copper B (CU(B)). The BNC reduces molecular oxygen to 2 water molecules using 4 electrons from cytochrome c in the IMS and 4 protons from the mitochondrial matrix. The protein is Cytochrome c oxidase subunit 2 (MT-CO2) of Petromyzon marinus (Sea lamprey).